A 120-amino-acid chain; its full sequence is Aspartate 1-decarboxylase (120 aa).

Catalysis depends on serine 25, which acts as the Schiff-base intermediate with substrate; via pyruvic acid. The residue at position 25 (serine 25) is a Pyruvic acid (Ser). Threonine 57 contributes to the substrate binding site. The active-site Proton donor is tyrosine 58. Residue glycine 73 to alanine 75 coordinates substrate.

Belongs to the PanD family. In terms of assembly, heterooctamer of four alpha and four beta subunits. It depends on pyruvate as a cofactor. In terms of processing, is synthesized initially as an inactive proenzyme, which is activated by self-cleavage at a specific serine bond to produce a beta-subunit with a hydroxyl group at its C-terminus and an alpha-subunit with a pyruvoyl group at its N-terminus.

Its subcellular location is the cytoplasm. It carries out the reaction L-aspartate + H(+) = beta-alanine + CO2. Its pathway is cofactor biosynthesis; (R)-pantothenate biosynthesis; beta-alanine from L-aspartate: step 1/1. Its function is as follows. Catalyzes the pyruvoyl-dependent decarboxylation of aspartate to produce beta-alanine. The sequence is that of Aspartate 1-decarboxylase from Deinococcus geothermalis (strain DSM 11300 / CIP 105573 / AG-3a).